A 355-amino-acid chain; its full sequence is NAD-dependent protein deacylase sirtuin-6 (355 aa).

Serine 2 carries the post-translational modification N-acetylserine. Serine 10 is modified (phosphoserine). In terms of domain architecture, Deacetylase sirtuin-type spans proline 27–glutamate 272. N6-acetyllysine is present on lysine 33. NAD(+) contacts are provided by alanine 53, threonine 57, phenylalanine 64, arginine 65, tryptophan 71, glutamine 113, and histidine 133. Residue histidine 133 is the Proton acceptor of the active site. Zn(2+)-binding residues include cysteine 141, cysteine 144, and cysteine 166. Lysine 170 is covalently cross-linked (Glycyl lysine isopeptide (Lys-Gly) (interchain with G-Cter in ubiquitin)). Cysteine 177 lines the Zn(2+) pocket. NAD(+) is bound by residues glycine 214, serine 216, asparagine 240, glutamine 242, and valine 258. Positions arginine 284 to serine 355 are disordered. Over residues proline 287 to lysine 296 the composition is skewed to pro residues. Threonine 294 is subject to Phosphothreonine. Serine 303 and serine 330 each carry phosphoserine.

Belongs to the sirtuin family. Class IV subfamily. As to quaternary structure, homodimer; binds to nucleosomes and DNA ends as a homodimer. Interacts with RELA; interferes with RELA binding to target DNA. Interacts with SMARCA5; promoting recruitment of SMARCA5/SNF2H to double-strand breaks (DSBs) sites. Interacts with the mTORC2 complex; preventing the ability of SIRT6 to deacetylate FOXO1. Interacts with the CLOCK-BMAL1 complex; recruited by the CLOCK-BMAL1 complex to regulate expression of clock-controlled genes. Interacts with CSNK2A2; preventing CSNK2A2 localization to the nucleus. Acetylated at Lys-33. Deacetylation at Lys-33 by SIRT1 promotes homomultimerization and binding to double-strand breaks (DSBs) sites. Post-translationally, phosphorylation at Ser-10 by MAPK8/JNK1 in response to oxidative stress stimulates the mono-ADP-ribosyltransferase activity on PARP1, leading to PARP1 recruitment to double-strand breaks (DSBs). In terms of processing, monoubiquitinated at Lys-170 by STUB1/CHIP, preventing its degradation by the proteasome. Sumoylated, leading to specifically decrease ability to deacetylate histone H3 at 'Lys-56' (H3K56ac).

The protein resides in the nucleus. It is found in the chromosome. Its subcellular location is the telomere. The protein localises to the endoplasmic reticulum. It catalyses the reaction N(6)-acetyl-L-lysyl-[protein] + NAD(+) + H2O = 2''-O-acetyl-ADP-D-ribose + nicotinamide + L-lysyl-[protein]. It carries out the reaction N(6)-tetradecanoyl-L-lysyl-[protein] + NAD(+) + H2O = 2''-O-tetradecanoyl-ADP-D-ribose + nicotinamide + L-lysyl-[protein]. The enzyme catalyses N(6)-hexadecanoyl-L-lysyl-[protein] + NAD(+) + H2O = 2''-O-hexadecanoyl-ADP-D-ribose + nicotinamide + L-lysyl-[protein]. The catalysed reaction is L-lysyl-[protein] + NAD(+) = N(6)-(ADP-D-ribosyl)-L-lysyl-[protein] + nicotinamide + H(+). It catalyses the reaction L-arginyl-[protein] + NAD(+) = N(omega)-(ADP-D-ribosyl)-L-arginyl-[protein] + nicotinamide + H(+). Its activity is regulated as follows. Compared to the defatty-acylase activity, the protein deacetylase activity is weak in vitro, and requires activation. The histone deacetylase activity is strongly activated upon binding to nucleosomes and chromatin in vivo. Two molecules of SIRT6 associate with the acidic patch of one nucleosome, while the C-terminal disordered region of SIRT6 associates with nucleosomal DNA, leading to efficient histone deacetylation. The protein-lysine deacetylase activity is also activated by long-chain free fatty-acids. Functionally, NAD-dependent protein deacetylase, deacylase and mono-ADP-ribosyltransferase that plays an essential role in DNA damage repair, telomere maintenance, metabolic homeostasis, inflammation, tumorigenesis and aging. Displays protein-lysine deacetylase or defatty-acylase (demyristoylase and depalmitoylase) activity, depending on the context. Acts as a key histone deacetylase by catalyzing deacetylation of histone H3 at 'Lys-9', 'Lys-18' and 'Lys-56' (H3K9ac, H3K18ac and H3K56ac, respectively), suppressing target gene expression of several transcription factors, including NF-kappa-B. Acts as an inhibitor of transcription elongation by mediating deacetylation of H3K9ac and H3K56ac, preventing release of NELFE from chromatin and causing transcriptional pausing. Involved in DNA repair by promoting double-strand break (DSB) repair: acts as a DSB sensor by recognizing and binding DSB sites, leading to (1) recruitment of DNA repair proteins, such as SMARCA5/SNF2H, and (2) deacetylation of histone H3K9ac and H3K56ac. SIRT6 participation to DSB repair is probably involved in extension of life span. Also promotes DNA repair by deacetylating non-histone proteins, such as DDB2 and p53/TP53. Specifically deacetylates H3K18ac at pericentric heterochromatin, thereby maintaining pericentric heterochromatin silencing at centromeres and protecting against genomic instability and cellular senescence. Involved in telomere maintenance by catalyzing deacetylation of histone H3 in telomeric chromatin, regulating telomere position effect and telomere movement in response to DNA damage. Required for embryonic stem cell differentiation by mediating histone deacetylation of H3K9ac. Plays a major role in metabolism by regulating processes such as glycolysis, gluconeogenesis, insulin secretion and lipid metabolism. Inhibits glycolysis via histone deacetylase activity and by acting as a corepressor of the transcription factor HIF1A, thereby controlling the expression of multiple glycolytic genes. Has tumor suppressor activity by repressing glycolysis, thereby inhibiting the Warburg effect. Also regulates glycolysis and tumorigenesis by mediating deacetylation and nuclear export of non-histone proteins, such as isoform M2 of PKM (PKM2). Acts as a negative regulator of gluconeogenesis by mediating deacetylation of non-histone proteins, such as FOXO1 and KAT2A/GCN5. Promotes beta-oxidation of fatty acids during fasting by catalyzing deacetylation of NCOA2, inducing coactivation of PPARA. Acts as a regulator of lipid catabolism in brown adipocytes, both by catalyzing deacetylation of histones and non-histone proteins, such as FOXO1. Also acts as a regulator of circadian rhythms, both by regulating expression of clock-controlled genes involved in lipid and carbohydrate metabolism, and by catalyzing deacetylation of PER2. The defatty-acylase activity is specifically involved in regulation of protein secretion. Has high activity toward long-chain fatty acyl groups and mediates protein-lysine demyristoylation and depalmitoylation of target proteins, such as RRAS2 and TNF, thereby regulating their secretion. Also acts as a mono-ADP-ribosyltransferase by mediating mono-ADP-ribosylation of PARP1, TRIM28/KAP1 or SMARCC2/BAF170. Mono-ADP-ribosyltransferase activity is involved in DNA repair, cellular senescence, repression of LINE-1 retrotransposon elements and regulation of transcription. This is NAD-dependent protein deacylase sirtuin-6 from Macaca fascicularis (Crab-eating macaque).